Here is a 218-residue protein sequence, read N- to C-terminus: Glutathione S-transferase Mu 2 (218 aa).

The 87-residue stretch at 2–88 folds into the GST N-terminal domain; sequence PMTLGYWDIR…YLARKHNLCG (87 aa). 7 to 8 provides a ligand contact to glutathione; sequence YW. Phosphoserine occurs at positions 27 and 44. Glutathione-binding positions include 43 to 46, K50, 59 to 60, and 72 to 73; these read RSQW, NL, and QS. Positions 90–208 constitute a GST C-terminal domain; sequence TEEERIRVDI…KSSRFLSKPI (119 aa). Y116 provides a ligand contact to substrate. S117 carries the post-translational modification Phosphoserine.

Belongs to the GST superfamily. Mu family. As to quaternary structure, homodimer.

It is found in the cytoplasm. It carries out the reaction RX + glutathione = an S-substituted glutathione + a halide anion + H(+). The enzyme catalyses 11(S)-hydroxy-14(S),15(S)-epoxy-(5Z,8Z,12E)-eicosatrienoate + glutathione = (11S,15S)-dihydroxy-14(R)-S-glutathionyl-(5Z,8Z,12E)-eicosatrienoate. Functionally, conjugation of reduced glutathione to a wide number of exogenous and endogenous hydrophobic electrophiles. Participates in the formation of novel hepoxilin regioisomers. The chain is Glutathione S-transferase Mu 2 from Mus musculus (Mouse).